A 305-amino-acid chain; its full sequence is Acetyl-coenzyme A carboxylase carboxyl transferase subunit beta (305 aa).

One can recognise a CoA carboxyltransferase N-terminal domain in the interval 23–292; sequence GWLKCTHCNE…EENEPSPPPK (270 aa). The Zn(2+) site is built by C27, C30, C46, and C49. The C4-type zinc-finger motif lies at 27-49; sequence CTHCNELIHANELEQNSNCCPKC. The disordered stretch occupies residues 281 to 305; that stretch reads FSEENEPSPPPKNLIKKTSPLKDKN.

Belongs to the AccD/PCCB family. As to quaternary structure, acetyl-CoA carboxylase is a heterohexamer composed of biotin carboxyl carrier protein (AccB), biotin carboxylase (AccC) and two subunits each of ACCase subunit alpha (AccA) and ACCase subunit beta (AccD). Zn(2+) is required as a cofactor.

The protein localises to the cytoplasm. The catalysed reaction is N(6)-carboxybiotinyl-L-lysyl-[protein] + acetyl-CoA = N(6)-biotinyl-L-lysyl-[protein] + malonyl-CoA. It participates in lipid metabolism; malonyl-CoA biosynthesis; malonyl-CoA from acetyl-CoA: step 1/1. Functionally, component of the acetyl coenzyme A carboxylase (ACC) complex. Biotin carboxylase (BC) catalyzes the carboxylation of biotin on its carrier protein (BCCP) and then the CO(2) group is transferred by the transcarboxylase to acetyl-CoA to form malonyl-CoA. The polypeptide is Acetyl-coenzyme A carboxylase carboxyl transferase subunit beta (Protochlamydia amoebophila (strain UWE25)).